We begin with the raw amino-acid sequence, 345 residues long: Phosphoribosylformylglycinamidine cyclo-ligase (345 aa).

Belongs to the AIR synthase family.

Its subcellular location is the cytoplasm. It catalyses the reaction 2-formamido-N(1)-(5-O-phospho-beta-D-ribosyl)acetamidine + ATP = 5-amino-1-(5-phospho-beta-D-ribosyl)imidazole + ADP + phosphate + H(+). Its pathway is purine metabolism; IMP biosynthesis via de novo pathway; 5-amino-1-(5-phospho-D-ribosyl)imidazole from N(2)-formyl-N(1)-(5-phospho-D-ribosyl)glycinamide: step 2/2. This chain is Phosphoribosylformylglycinamidine cyclo-ligase, found in Aeromonas salmonicida (strain A449).